We begin with the raw amino-acid sequence, 866 residues long: N-alpha-acetyltransferase 15, NatA auxiliary subunit (866 aa).

4 TPR repeats span residues 46-79 (GETL…DLKS), 80-113 (HVCW…DKDN), 148-184 (RASW…SPDK), and 224-257 (LAVE…NPEN). The residue at position 262 (Lys-262) is an N6-acetyllysine. Residue Ser-302 is modified to Phosphoserine. TPR repeat units follow at residues 374 to 407 (LWVQ…TPTL), 409 to 441 (ELFL…DTAD), and 485 to 518 (MWFQ…FIEI). An interaction with HYPK region spans residues 500 to 866 (KFGEALKKCH…AEAEELANEI (367 aa)). 2 positions are modified to phosphoserine: Ser-537 and Ser-588. Residues 579-594 (EHEADTANMSDKELKK) are compositionally biased toward basic and acidic residues. Residues 579–642 (EHEADTANMS…EEIGGPKEEL (64 aa)) form a disordered region. Residues 595 to 604 (LRNKQRRAQK) show a composition bias toward basic residues. Over residues 606–621 (AQIEEEKKNAEKEKQQ) the composition is skewed to basic and acidic residues. The short motif at 612-629 (KKNAEKEKQQRNQKKKKD) is the Bipartite nuclear localization signal element. A TPR 8 repeat occupies 672 to 705 (IETHLFAFEIYFRKEKFLLMLQSVKRAFAIDSSH). Residues Lys-735 and Lys-756 each carry the N6-acetyllysine modification. 2 positions are modified to phosphoserine: Ser-855 and Ser-856.

As to quaternary structure, component of the N-terminal acetyltransferase A complex (also called the NatA complex) composed of NAA10 and NAA15. Within the complex interacts with NAA10. Component of the N-terminal acetyltransferase A (NatA)/HYPK complex at least composed of NAA10, NAA15 and HYPK, which has N-terminal acetyltransferase activity. In complex with NAA10, interacts with HYPK. Component of the N-terminal acetyltransferase E (NatE) complex at least composed of NAA10, NAA15 and NAA50. Within the complex interacts with NAA10; the interaction is required for binding to NAA50. Interacts with NAAT50. The interaction of the NatA complex with NAA50 reduces the acetylation activity of the NatA complex. Component of the N-terminal acetyltransferase E (NatE)/HYPK complex at least composed of NAA10, NAA15, NAA50 and HYPK. In complex with NAA10 interacts with HYPK; the interaction with HYPK reduces the capacity of the NatA complex to interact with NAA50. Interacts with NAA11. Interacts with XRCC6 and XRCC5. Cleaved by caspases during apoptosis, resulting in a stable 35 kDa fragment. As to expression, expressed at high levels in testis and in ocular endothelial cells. Also found in brain (corpus callosum), heart, colon, bone marrow and at lower levels in most adult tissues, including thyroid, liver, pancreas, mammary and salivary glands, lung, ovary, urogenital system and upper gastrointestinal tract. Overexpressed in gastric cancer, in papillary thyroid carcinomas and in a Burkitt lymphoma cell line (Daudi). Specifically suppressed in abnormal proliferating blood vessels in eyes of patients with proliferative diabetic retinopathy.

It is found in the cytoplasm. The protein localises to the nucleus. In terms of biological role, auxillary subunit of N-terminal acetyltransferase complexes which display alpha (N-terminal) acetyltransferase (NAT) activity. The NAT activity may be important for vascular, hematopoietic and neuronal growth and development. Required to control retinal neovascularization in adult ocular endothelial cells. In complex with XRCC6 and XRCC5 (Ku80), up-regulates transcription from the osteocalcin promoter. This Homo sapiens (Human) protein is N-alpha-acetyltransferase 15, NatA auxiliary subunit (NAA15).